The primary structure comprises 288 residues: MSQFSFTKMHGLGNSYIYVNMFEEQIREEDLAIVAEKVSNINTGIGADGMILICPSDVAPVKMRMFNNDGSEGKSCGNGLRCVAKYAYEHKLVEGKVFTIETLAGIVTAEVTVEDDKVTLAKIDMGAPRLTREEIPMLGEGETPFIRENFLYNNHRYAFTAVSMGNPHAVIFVDDVENAPLTTLGPVLETHEMFPERVNVEFIEILNDEEMNFRVWERGSGVTQACGTGACAAVVAAILNGKMEHGKEITVHLAGGDLMIAWTEEGNVLMKGPAEIICRGVYEYKIEA.

2 residues coordinate substrate: Asn14 and Asn67. Cys76 functions as the Proton donor in the catalytic mechanism. Substrate-binding positions include 77 to 78 (GN), Asn166, Asn199, and 217 to 218 (ER). Cys226 serves as the catalytic Proton acceptor. 227–228 (GT) contacts substrate.

It belongs to the diaminopimelate epimerase family. Homodimer.

It localises to the cytoplasm. The enzyme catalyses (2S,6S)-2,6-diaminopimelate = meso-2,6-diaminopimelate. The protein operates within amino-acid biosynthesis; L-lysine biosynthesis via DAP pathway; DL-2,6-diaminopimelate from LL-2,6-diaminopimelate: step 1/1. In terms of biological role, catalyzes the stereoinversion of LL-2,6-diaminopimelate (L,L-DAP) to meso-diaminopimelate (meso-DAP), a precursor of L-lysine and an essential component of the bacterial peptidoglycan. This chain is Diaminopimelate epimerase, found in Bacillus mycoides (strain KBAB4) (Bacillus weihenstephanensis).